Consider the following 519-residue polypeptide: Cytochrome P450 52-E3 (519 aa).

The chain crosses the membrane as a helical span at residues 10–30 (VLGGISVSFLLAYQAIYFYFI). Cysteine 461 serves as a coordination point for heme.

It belongs to the cytochrome P450 family. Heme serves as cofactor.

It localises to the membrane. It carries out the reaction an omega-methyl-long-chain fatty acid + reduced [NADPH--hemoprotein reductase] + O2 = an omega-hydroxy-long-chain fatty acid + oxidized [NADPH--hemoprotein reductase] + H2O + H(+). The enzyme catalyses (9Z)-octadecenoate + reduced [NADPH--hemoprotein reductase] + O2 = 18-hydroxy-(9Z)-octadecenoate + oxidized [NADPH--hemoprotein reductase] + H2O + H(+). The catalysed reaction is hexadecanoate + reduced [NADPH--hemoprotein reductase] + O2 = 16-hydroxyhexadecanoate + oxidized [NADPH--hemoprotein reductase] + H2O + H(+). It catalyses the reaction (9Z)-hexadecenoate + reduced [NADPH--hemoprotein reductase] + O2 = (9Z)-16-hydroxyhexadec-9-enoate + oxidized [NADPH--hemoprotein reductase] + H2O + H(+). In terms of biological role, catalyzes the terminal (at the omega-position) hydroxylation of a fatty acid. Probably involved in alkane metabolism. Has minor activity toward myristic acid, palmitic acid, palmitoleic acid and oleic acid. This Starmerella bombicola (Yeast) protein is Cytochrome P450 52-E3.